The chain runs to 469 residues: Protein RUFY3 (469 aa).

T5 and T12 each carry phosphothreonine. Residues Y27, S34, and S49 each carry the phosphoserine modification. T51 carries the post-translational modification Phosphothreonine. D53 bears the Phosphoserine mark. The RUN domain occupies D95–E227. Coiled-coil stretches lie at residues N271 to E362 and K422 to K463. Positions S321–A337 are enriched in basic and acidic residues. Residues S321–L342 form a disordered region.

In terms of assembly, interacts with PAK1. Interacts (via C-terminus) with Ras-related Rab-5 proteins. Interacts (via C-terminus) with Ras-related Rap-2 proteins. Interacts with PIK3CA and PIK3R1. Interacts (via N-terminus) with FSCN1; this interaction induces neuron axon development. Interacts with DBN1. Interacts (via the second coiled coil) with GTP-, but not GDP-bound ARL8A and ARL8B. Interacts with dynactin/DCTN1 and the dynein intermediate chain DYNC1I1/2. Directly interacts with DYNC1LI1. Post-translationally, phosphorylated by PAK1. Isoform 1 is partially phosphorylated. Expressed in brain (at protein level).

It localises to the cytoplasm. The protein resides in the endomembrane system. Its subcellular location is the cell projection. It is found in the invadopodium. The protein localises to the growth cone. It localises to the perikaryon. The protein resides in the filopodium. Its subcellular location is the lamellipodium. It is found in the lysosome. In terms of biological role, ARL8 effector that promotes the coupling of endolysosomes to dynein-dynactin for retrograde transport along microtubules. Acts by binding both GTP-bound ARL8 and dynein-dynactin. In nonneuronal cells, promotes concentration of endolysosomes in the juxtanuclear area. In hippocampal neurons, drives retrograde transport of endolysosomes from the axon to the soma. Plays a role in the generation of neuronal polarity formation and axon growth. Implicated in the formation of a single axon by developing neurons. May inhibit the formation of additional axons by inhibition of PI3K in minor neuronal processes. Plays a role in the formation of F-actin-enriched protrusive structures at the cell periphery. Plays a role in cytoskeletal organization by regulating the subcellular localization of FSCN1 and DBN1 at axonal growth cones. The chain is Protein RUFY3 from Mus musculus (Mouse).